We begin with the raw amino-acid sequence, 267 residues long: Regulatory protein RecX (267 aa).

This sequence belongs to the RecX family.

It localises to the cytoplasm. Its function is as follows. Modulates RecA activity. The chain is Regulatory protein RecX from Leuconostoc mesenteroides subsp. mesenteroides (strain ATCC 8293 / DSM 20343 / BCRC 11652 / CCM 1803 / JCM 6124 / NCDO 523 / NBRC 100496 / NCIMB 8023 / NCTC 12954 / NRRL B-1118 / 37Y).